A 1140-amino-acid polypeptide reads, in one-letter code: Eukaryotic translation initiation factor 3 subunit A (1140 aa).

A PCI domain is found at 319 to 501 (LQRMAAHVLL…NSIYFGTDLT (183 aa)). Basic and acidic residues-rich tracts occupy residues 588–623 (QNNAREEEEARRQEEESRKAKLAEQKRLEQEQEERE) and 829–899 (AAEE…RGGD). 2 disordered regions span residues 588–630 (QNNA…HQNE) and 829–1140 (AAEE…VKRR). S908 carries the post-translational modification Phosphoserine. Basic and acidic residues-rich tracts occupy residues 920 to 976 (ERND…EPDS), 990 to 1051 (SRDD…EPQR), 1059 to 1086 (DAPRHADRETRRPAERRDRDVRETRGDQ), and 1109 to 1130 (TREEKPAAKRDQAQEKENKAGD).

The protein belongs to the eIF-3 subunit A family. As to quaternary structure, component of the eukaryotic translation initiation factor 3 (eIF-3) complex. The eIF-3 complex interacts with pix.

Its subcellular location is the cytoplasm. Its function is as follows. RNA-binding component of the eukaryotic translation initiation factor 3 (eIF-3) complex, which is involved in protein synthesis of a specialized repertoire of mRNAs and, together with other initiation factors, stimulates binding of mRNA and methionyl-tRNAi to the 40S ribosome. The eIF-3 complex specifically targets and initiates translation of a subset of mRNAs involved in cell proliferation. The chain is Eukaryotic translation initiation factor 3 subunit A from Drosophila melanogaster (Fruit fly).